Here is an 81-residue protein sequence, read N- to C-terminus: Cytotoxin 3d (81 aa).

The first 21 residues, 1–21 (MKTLLLTLVVVTIVCLDLGYT), serve as a signal peptide directing secretion. Cystine bridges form between Cys-24/Cys-42, Cys-35/Cys-59, Cys-63/Cys-74, and Cys-75/Cys-80.

This sequence belongs to the three-finger toxin family. Short-chain subfamily. Type IA cytotoxin sub-subfamily. Monomer in solution; Homodimer and oligomer in the presence of negatively charged lipids forming a pore with a size ranging between 20 and 30 Angstroms. Expressed by the venom gland.

The protein resides in the secreted. It is found in the target cell membrane. Shows cytolytic activity on many different cells by forming pore in lipid membranes. In vivo, increases heart rate or kills the animal by cardiac arrest. In addition, it binds to heparin with high affinity, interacts with Kv channel-interacting protein 1 (KCNIP1) in a calcium-independent manner, and binds to integrin alpha-V/beta-3 (ITGAV/ITGB3) with moderate affinity. This is Cytotoxin 3d from Naja atra (Chinese cobra).